Consider the following 266-residue polypeptide: CAAX prenyl protease 2 (266 aa).

3 helical membrane-spanning segments follow: residues 1–21 (MGAG…VHLF), 42–59 (LLSN…LRDY), and 78–98 (ITYP…MMQI). Catalysis depends on proton donor/acceptor residues E131 and H164. A run of 3 helical transmembrane segments spans residues 186 to 206 (GFQF…QLTT), 210 to 230 (IVPI…WLEI), and 239 to 259 (RLTL…LLYT).

The protein belongs to the peptidase U48 family.

It is found in the endoplasmic reticulum membrane. Its subcellular location is the membrane. It catalyses the reaction Hydrolyzes the peptide bond -P2-(S-farnesyl or geranylgeranyl)C-P1'-P2'-P3'-COOH where P1' and P2' are amino acids with aliphatic sidechains and P3' is any C-terminal residue.. In terms of biological role, protease involved in the processing of a variety of prenylated proteins containing the C-terminal CAAX motif, where C is a cysteine modified with an isoprenoid lipid, A is an aliphatic amino acid and X is any C-terminal amino acid. Proteolytically removes the C-terminal three residues of farnesylated and geranylated proteins, leaving the prenylated cysteine as the new C-terminus. In Caenorhabditis elegans, this protein is CAAX prenyl protease 2.